A 605-amino-acid chain; its full sequence is DNA mismatch repair protein MutL (605 aa).

This sequence belongs to the DNA mismatch repair MutL/HexB family.

This protein is involved in the repair of mismatches in DNA. It is required for dam-dependent methyl-directed DNA mismatch repair. May act as a 'molecular matchmaker', a protein that promotes the formation of a stable complex between two or more DNA-binding proteins in an ATP-dependent manner without itself being part of a final effector complex. The polypeptide is DNA mismatch repair protein MutL (Methylocella silvestris (strain DSM 15510 / CIP 108128 / LMG 27833 / NCIMB 13906 / BL2)).